The following is a 501-amino-acid chain: UPF0288 protein Maeo_0995 (501 aa).

The protein belongs to the UPF0288 family.

This chain is UPF0288 protein Maeo_0995, found in Methanococcus aeolicus (strain ATCC BAA-1280 / DSM 17508 / OCM 812 / Nankai-3).